The sequence spans 118 residues: Ribonuclease P protein component (118 aa).

The protein belongs to the RnpA family. Consists of a catalytic RNA component (M1 or rnpB) and a protein subunit.

The catalysed reaction is Endonucleolytic cleavage of RNA, removing 5'-extranucleotides from tRNA precursor.. In terms of biological role, RNaseP catalyzes the removal of the 5'-leader sequence from pre-tRNA to produce the mature 5'-terminus. It can also cleave other RNA substrates such as 4.5S RNA. The protein component plays an auxiliary but essential role in vivo by binding to the 5'-leader sequence and broadening the substrate specificity of the ribozyme. The protein is Ribonuclease P protein component of Vibrio parahaemolyticus serotype O3:K6 (strain RIMD 2210633).